Consider the following 275-residue polypeptide: Probable endonuclease 4 (275 aa).

Zn(2+)-binding residues include His66, His106, Glu140, Asp172, His175, His209, Asp222, His224, and Glu254.

This sequence belongs to the AP endonuclease 2 family. Zn(2+) serves as cofactor.

The enzyme catalyses Endonucleolytic cleavage to 5'-phosphooligonucleotide end-products.. Endonuclease IV plays a role in DNA repair. It cleaves phosphodiester bonds at apurinic or apyrimidinic (AP) sites, generating a 3'-hydroxyl group and a 5'-terminal sugar phosphate. This is Probable endonuclease 4 from Halobacterium salinarum (strain ATCC 29341 / DSM 671 / R1).